The primary structure comprises 161 residues: MTGAVCPGSFDPVTLGHVDIFERAAAQFDEVVVAILVNPAKTGMFDLDERIAMVKESTTHLPNLRVQVGHGLVVDFVRSCGMTAIVKGLRTGTDFEYELQMAQMNKHIAGVDTFFVATAPRYSFVSSSLAKEVAMLGGDVSELLPEPVNRRLRDRLNTERT.

Residue Ser-9 coordinates substrate. ATP is bound by residues 9 to 10 (SF) and His-17. Lys-41, Val-73, and Lys-87 together coordinate substrate. Residues 88 to 90 (GLR), Glu-98, and 122 to 128 (YSFVSSS) each bind ATP.

The protein belongs to the bacterial CoaD family. In terms of assembly, homohexamer. It depends on Mg(2+) as a cofactor.

The protein resides in the cytoplasm. It carries out the reaction (R)-4'-phosphopantetheine + ATP + H(+) = 3'-dephospho-CoA + diphosphate. It participates in cofactor biosynthesis; coenzyme A biosynthesis; CoA from (R)-pantothenate: step 4/5. Its function is as follows. Reversibly transfers an adenylyl group from ATP to 4'-phosphopantetheine, yielding dephospho-CoA (dPCoA) and pyrophosphate. The sequence is that of Phosphopantetheine adenylyltransferase from Mycobacterium bovis (strain ATCC BAA-935 / AF2122/97).